The chain runs to 294 residues: 4-hydroxy-tetrahydrodipicolinate synthase (294 aa).

Residue threonine 47 coordinates pyruvate. Tyrosine 135 (proton donor/acceptor) is an active-site residue. The Schiff-base intermediate with substrate role is filled by lysine 163. Residue isoleucine 205 coordinates pyruvate.

It belongs to the DapA family. Homotetramer; dimer of dimers.

It is found in the cytoplasm. It carries out the reaction L-aspartate 4-semialdehyde + pyruvate = (2S,4S)-4-hydroxy-2,3,4,5-tetrahydrodipicolinate + H2O + H(+). Its pathway is amino-acid biosynthesis; L-lysine biosynthesis via DAP pathway; (S)-tetrahydrodipicolinate from L-aspartate: step 3/4. Its function is as follows. Catalyzes the condensation of (S)-aspartate-beta-semialdehyde [(S)-ASA] and pyruvate to 4-hydroxy-tetrahydrodipicolinate (HTPA). In Rickettsia prowazekii (strain Madrid E), this protein is 4-hydroxy-tetrahydrodipicolinate synthase.